A 758-amino-acid chain; its full sequence is MVRTKNQSSSSSASSSSTKSPIKSSSGAGSSGGGLGGRQSTHRSSSASNVAAVVAGGSSAAGGGSSSNRRSPGSSPDGDDDTTTTDDLTPTTCSPRSGHHHSYGGYSSSVHKQNLYVVSFPIIFLFNVLRSLIYQLFCIFRYLYGASTKVIYRPHRRDCNIEIVVQNSSKEQQQSLNHPSELNREGDGQEQQLSNQPQRFRPIQPLEMAANRPGGGYSPGPGDPLLAKQKHHHRRAFEYISKALKIDEENEGHKELAIELYRKGIKELEDGIAVDCWSGRGDVWDRAQRLHDKMQTNLSMARDRLHFLALREQDLQMQRLSLKEKQKEEAQSKPQKTREPMLAGMTNEPMKLRVRSSGYGPKATTSAQPTASGRKLTIGSKRPVNLAVANKSQTLPRNLGSKTSVGAVQRQPAKTAATPPAVRRQFSSGRNTPPQRSRTPINNNGPSGSGASTPVVSVKGVEQKLVQLILDEIVEGGAKVEWTDIAGQDVAKQALQEMVILPSVRPELFTGLRAPAKGLLLFGPPGNGKTLLARAVATECSATFLNISAASLTSKYVGDGEKLVRALFAVARHMQPSIIFIDEVDSLLSERSSSEHEASRRLKTEFLVEFDGLPGNPDGDRIVVLAATNRPQELDEAALRRFTKRVYVSLPDEQTRELLLNRLLQKQGSPLDTEALRRLAKITDGYSGSDLTALAKDAALEPIRELNVEQVKCLDISAMRAITEQDFHSSLKRIRRSVAPQSLNSYEKWSQDYGDITI.

The segment at 1–103 (MVRTKNQSSS…SPRSGHHHSY (103 aa)) is disordered. The Cytoplasmic portion of the chain corresponds to 1-121 (MVRTKNQSSS…KQNLYVVSFP (121 aa)). An interaction with atl region spans residues 1–159 (MVRTKNQSSS…VIYRPHRRDC (159 aa)). Residues 1-210 (MVRTKNQSSS…RPIQPLEMAA (210 aa)) are required for localization to punctate cytoplasmic foci. Composition is skewed to low complexity over residues 8-28 (SSSS…SSGA), 43-58 (RSSS…AGGS), 66-76 (SSNRRSPGSSP), and 85-95 (TDDLTPTTCSP). The segment at residues 122–142 (IIFLFNVLRSLIYQLFCIFRY) is an intramembrane region (helical). Topologically, residues 143–758 (LYGASTKVIY…WSQDYGDITI (616 aa)) are cytoplasmic. Composition is skewed to polar residues over residues 169–180 (SKEQQQSLNHPS) and 189–198 (QEQQLSNQPQ). A disordered region spans residues 169–202 (SKEQQQSLNHPSELNREGDGQEQQLSNQPQRFRP). The sufficient for interaction with microtubules and microtubule severing stretch occupies residues 208–758 (MAANRPGGGY…WSQDYGDITI (551 aa)). Residues 233–308 (HRRAFEYISK…SMARDRLHFL (76 aa)) form the MIT domain. A disordered region spans residues 353-454 (RVRSSGYGPK…GPSGSGASTP (102 aa)). 2 stretches are compositionally biased toward polar residues: residues 390–406 (NKSQ…TSVG) and 425–454 (QFSS…ASTP). Residue threonine 439 is modified to Phosphothreonine. Residues 443–455 (NNGPSGSGASTPV) are required for interaction with microtubules. An ATP-binding site is contributed by 523–530 (GPPGNGKT).

It belongs to the AAA ATPase family. Spastin subfamily. As to quaternary structure, homohexamer. The homohexamer is stabilized by ATP-binding. The homohexamer may adopt a ring conformation through which microtubules pass prior to being severed. Interacts with microtubules. Interacts with atl; may be involved in microtubule dynamics.

It is found in the membrane. It localises to the cytoplasm. Its subcellular location is the cytoskeleton. The protein resides in the microtubule organizing center. The protein localises to the centrosome. It is found in the chromosome. It localises to the lipid droplet. The enzyme catalyses n ATP + n H2O + a microtubule = n ADP + n phosphate + (n+1) alpha/beta tubulin heterodimers.. Its function is as follows. ATP-dependent microtubule severing protein. Stimulates microtubule minus-end depolymerization and poleward microtubule flux in the mitotic spindle. Regulates microtubule stability in the neuromuscular junction synapse. Involved in lipid metabolism by regulating the size and distribution of lipid droplets. Involved in axon regeneration by regulating microtubule severing. This Drosophila melanogaster (Fruit fly) protein is Spastin.